Consider the following 771-residue polypeptide: Hyperosmolality-gated Ca2+ permeable channel 1.2 (771 aa).

Over 1–4 (MATL) the chain is Extracellular. Residues 5–27 (QDIGVSAGINILSAFVFFIIFAV) traverse the membrane as a helical segment. Residues 28–100 (LRLQPFNDRV…AGLDSVVYLR (73 aa)) are Cytoplasmic-facing. A helical membrane pass occupies residues 101–125 (IYWLGLKIFTPIAVLAWAVLVPVNW). Residues 126–156 (TNNTLEMAKQLRNVTSSDIDKLSVSNIPEYS) are Extracellular-facing. The helical transmembrane segment at 157–178 (MRFWTHIVMAYAFTIWTCYVLM) threads the bilayer. Residues 179 to 374 (KEYETIANMR…AIPYVSLTVR (196 aa)) are Cytoplasmic-facing. The helical transmembrane segment at 375–401 (RLIMHVAFFFLTFFFIVPIAFVQSLAT) threads the bilayer. At 402–419 (IEGIVKAAPFLKFIVDDK) the chain is on the extracellular side. Residues 420–445 (FMKSVIQGFLPGIALKLFLAFLPSIL) form a helical membrane-spanning segment. Residues 446–462 (MIMSKFEGFTSISSLER) lie on the Cytoplasmic side of the membrane. The chain crosses the membrane as a helical span at residues 463–485 (RAAFRYYIFNLVNVFLASVIAGA). Topologically, residues 486-504 (AFEQLNSFLNQSANQIPKT) are extracellular. Residues 505–533 (IGVAIPMKATFFITYIMVDGWAGVAGEIL) form a helical membrane-spanning segment. Topologically, residues 534–566 (MLKPLIMFHLKNAFLVKTDKDREEAMDPGSIGF) are cytoplasmic. Residues 567–588 (NTGEPRIQLYFLLGLVYAPVTP) form a helical membrane-spanning segment. Position 589 (Met-589) is a topological domain, extracellular. The helical transmembrane segment at 590 to 605 (LLPFILVFFALAYIVY) threads the bilayer. The Cytoplasmic portion of the chain corresponds to 606–625 (RHQIINVYNQEYESAAAFWP). The helical transmembrane segment at 626 to 648 (DVHGRVIAALVISQLLLMGLLGT) threads the bilayer. Topologically, residues 649-651 (KHA) are extracellular. Residues 652 to 670 (ALAAPFLIALPVLTIGFHH) form a helical membrane-spanning segment. The Cytoplasmic portion of the chain corresponds to 671-771 (FCKGRYEPAF…PSLPFSGKLV (101 aa)). The segment at 741–771 (PTKRQSRRNTPAPSIISGDDSPSLPFSGKLV) is disordered.

This sequence belongs to the CSC1 (TC 1.A.17) family. As to quaternary structure, homodimer.

The protein localises to the membrane. Its activity is regulated as follows. Activated by hyperosmotic shock after mannitol or NaCl treatment. Activated by mechanical pressure: activated in response to membrane stretch and poke. Membrane lipids play a key role in mechanosensation by acting as a wall mainly formed by lipid head groups. Acts as an osmosensitive calcium-permeable cation channel. Specifically conducts cations including Ca(2+), K(+) and Na(+) in vitro. Inactivation or closure of the channel is calcium-dependent. Mechanosensitive ion channel that converts mechanical stimuli into a flow of ions: activated in response to membrane stretch and poke. The chain is Hyperosmolality-gated Ca2+ permeable channel 1.2 from Arabidopsis thaliana (Mouse-ear cress).